Reading from the N-terminus, the 337-residue chain is 2-oxoglutarate-dependent dioxygenase frbA (337 aa).

The Fe2OG dioxygenase domain occupies C175 to P290. 3 residues coordinate Fe cation: H202, D204, and H262. R281 serves as a coordination point for 2-oxoglutarate.

This sequence belongs to the iron/ascorbate-dependent oxidoreductase family. The cofactor is Fe(2+).

Its pathway is antifungal biosynthesis. Its function is as follows. 2-oxoglutarate-dependent dioxygenase; part of the gene cluster that mediates the biosynthesis of the antifungal antibiotic FR901469, an inhibitor of beta-1,3-glucansynthase, exerting antifungal activity against the pathogenes Candida albicans and Aspergillus fumigatus. FR901469 is a cyclic depsipeptide containing 12 amino acid residues and a fatty acid chain. The NRPS frbI contains 12 modules responsible for the formation of the depsipeptide backbone which is denoted as Acyl-Thr-Ala-Tyr-Val-4OHPro-Thr-Thr-3OHPro-threo3OHGln-Gly-Thr-Orn-OH (C71H116N14O23). The PKS frbB is probably involved in the production of the hydrocarbon chain, and the acyl-CoA ligase frbC might be involved in the transport of the chain to the peptide ptoduct of frbI. Because FR901469 contains 3 hydroxylated amino acid residues, the 3 oxygenases frbA, frbH, and frbJ might be participating in amino acid hydroxylation. As no thioesterase domains were detected in frbI or frbB, the thioesterases frbD and frbE may instead release and cyclize the products of the NRPS and PKS, respectively. This chain is 2-oxoglutarate-dependent dioxygenase frbA, found in Dothideomycetidae sp. (strain 11243) (Fungal sp. (strain No.11243)).